A 203-amino-acid polypeptide reads, in one-letter code: Octanoyltransferase (203 aa).

The BPL/LPL catalytic domain occupies 30 to 203 (EDQDNYFFIT…HIIKEGRKLV (174 aa)). Residues 69 to 76 (RGGSVTFH), 135 to 137 (SVG), and 148 to 150 (GIS) each bind substrate. Catalysis depends on Cys166, which acts as the Acyl-thioester intermediate.

It belongs to the LipB family.

Its subcellular location is the cytoplasm. The catalysed reaction is octanoyl-[ACP] + L-lysyl-[protein] = N(6)-octanoyl-L-lysyl-[protein] + holo-[ACP] + H(+). It participates in protein modification; protein lipoylation via endogenous pathway; protein N(6)-(lipoyl)lysine from octanoyl-[acyl-carrier-protein]: step 1/2. In terms of biological role, catalyzes the transfer of endogenously produced octanoic acid from octanoyl-acyl-carrier-protein onto the lipoyl domains of lipoate-dependent enzymes. Lipoyl-ACP can also act as a substrate although octanoyl-ACP is likely to be the physiological substrate. This Persephonella marina (strain DSM 14350 / EX-H1) protein is Octanoyltransferase.